Reading from the N-terminus, the 1149-residue chain is DNA polymerase (1149 aa).

Polar residues predominate over residues 1-28; it reads MSLVQSHGTSGLFTEPPNSINQQESSGP. Residues 1-49 are disordered; the sequence is MSLVQSHGTSGLFTEPPNSINQQESSGPSLPAQDATQASASSARAGATP. Over residues 31 to 49 the composition is skewed to low complexity; it reads PAQDATQASASSARAGATP.

Belongs to the DNA polymerase type-B family. In terms of assembly, heterodimer with the terminal protein; this heterodimer binds to bp 9 to 18 of the genome. Forms a complex with viral pTP, DBP and hosts NFIA and POU2F1/OCT1 for initiation of replication.

It localises to the host nucleus. It catalyses the reaction DNA(n) + a 2'-deoxyribonucleoside 5'-triphosphate = DNA(n+1) + diphosphate. In terms of biological role, eukaryotic-type DNA polymerase involved in viral genomic replication. DNA synthesis is protein primed, and acts in a strand displacement replication. Assembles in complex with viral pTP, DBP, host NFIA and host POU2F1/OCT1 on viral origin of replication. The polymerase covalently transfers dCMP onto pTP, thereby initiating complementary strand synthesis. This Canine adenovirus serotype 1 (strain CLL) (CAdV-1) protein is DNA polymerase.